The sequence spans 310 residues: MTEKLPLALFLMGPTASGKTDLAIRLRQKYPVEIISVDSALIYKDMDIGTAKPDAGELALAPHRLIDILDPSEAYSAADFRRDAISEMNKIVAEGKIPLLVGGTMLYYKALLEGLSPLPAADQEIRKQIEAESIEQGWQALHDQLREIDPVSAERIHPNDPQRLSRALEVYRISGKTLTELTQTKGDSLPFRVKQFAIAPKERKELHRRIELRFEKMIEAGFEDEMKALYAREDLHPELPSIRCVGYRQMWDYLDGNCDLDEAVFRGVCATRQLAKRQITWLRSWDDLTWLDSENIEQALETLSDAIASD.

13–20 contacts ATP; that stretch reads GPTASGKT. Substrate is bound at residue 15–20; the sequence is TASGKT. 4 interaction with substrate tRNA regions span residues 38-41, 162-166, 243-248, and 276-283; these read DSAL, QRLSR, RCVGYR, and KRQITWLR.

This sequence belongs to the IPP transferase family. As to quaternary structure, monomer. The cofactor is Mg(2+).

It carries out the reaction adenosine(37) in tRNA + dimethylallyl diphosphate = N(6)-dimethylallyladenosine(37) in tRNA + diphosphate. Functionally, catalyzes the transfer of a dimethylallyl group onto the adenine at position 37 in tRNAs that read codons beginning with uridine, leading to the formation of N6-(dimethylallyl)adenosine (i(6)A). The protein is tRNA dimethylallyltransferase of Vibrio atlanticus (strain LGP32) (Vibrio splendidus (strain Mel32)).